Reading from the N-terminus, the 537-residue chain is Mitochondria-eating protein (537 aa).

Positions 1–273 (MADNLRRLVS…PCSRSHSRSR (273 aa)) are interaction with YWHAG/14-3-3 protein gamma. Phosphoserine is present on residues Ser85, Ser127, Ser154, and Ser157. The stretch at 115 to 253 (GTRDIQQLDA…SAEKSVLQGR (139 aa)) forms a coiled coil. 2 disordered regions span residues 171-221 (QLKS…ANQR) and 249-293 (VLQG…AKLS). The span at 179-217 (EESRHRNSDRRRSEKRGSERRRVELRGSEQRVSDLDRRS) shows a compositional bias: basic and acidic residues. The segment covering 253-287 (RSARSRSPSPAPCSRSHSRSRSTSPSSAKARTPSP) has biased composition (low complexity). Phosphoserine occurs at positions 286 and 508.

This sequence belongs to the MIEAP family. Interacts (via coiled-coil domains) with BNIP3L (via BH3 domain). Interacts (via coiled-coil domains) with BNIP3 (via BH3 domain). Interacts with YWHAG/14-3-3 protein gamma; a protein that also plays a role in MALM.

It is found in the cytoplasm. Its subcellular location is the cytosol. It localises to the mitochondrion outer membrane. The protein resides in the mitochondrion matrix. Functionally, key regulator of mitochondrial quality that mediates the repairing or degradation of unhealthy mitochondria in response to mitochondrial damage. Mediator of mitochondrial protein catabolic process (also named MALM) by mediating the degradation of damaged proteins inside mitochondria by promoting the accumulation in the mitochondrial matrix of hydrolases that are characteristic of the lysosomal lumen. Also involved in mitochondrion degradation of damaged mitochondria by promoting the formation of vacuole-like structures (named MIV), which engulf and degrade unhealthy mitochondria by accumulating lysosomes. The physical interaction of SPATA18/MIEAP, BNIP3 and BNIP3L/NIX at the mitochondrial outer membrane regulates the opening of a pore in the mitochondrial double membrane in order to mediate the translocation of lysosomal proteins from the cytoplasm to the mitochondrial matrix. Binds cardiolipin. May form molecular condensates (non-membrane-bounded organelles) within mitochondria that compartmentalize and promote cardiolipin metabolism. This Bos taurus (Bovine) protein is Mitochondria-eating protein (SPATA18).